A 199-amino-acid polypeptide reads, in one-letter code: Recombination protein RecR (199 aa).

A C4-type zinc finger spans residues 57-72; the sequence is CTVCGHITDIDPCAIC. Residues 80–176 form the Toprim domain; the sequence is TVVCVVQDSR…RVTRLAHGLP (97 aa).

Belongs to the RecR family.

May play a role in DNA repair. It seems to be involved in an RecBC-independent recombinational process of DNA repair. It may act with RecF and RecO. The polypeptide is Recombination protein RecR (Exiguobacterium sp. (strain ATCC BAA-1283 / AT1b)).